We begin with the raw amino-acid sequence, 94 residues long: Citrate lyase acyl carrier protein (94 aa).

O-(phosphoribosyl dephospho-coenzyme A)serine is present on Ser14.

Belongs to the CitD family. Oligomer with a subunit composition of (alpha,beta,gamma)6.

It is found in the cytoplasm. Its function is as follows. Covalent carrier of the coenzyme of citrate lyase. The protein is Citrate lyase acyl carrier protein of Fusobacterium nucleatum subsp. nucleatum (strain ATCC 25586 / DSM 15643 / BCRC 10681 / CIP 101130 / JCM 8532 / KCTC 2640 / LMG 13131 / VPI 4355).